Consider the following 1148-residue polypeptide: Protocadherin-19 (1148 aa).

The first 21 residues, 1–21, serve as a signal peptide directing secretion; sequence MESLLLPVLLLLAILWTQAAA. 6 consecutive Cadherin domains span residues 22-129, 130-238, 239-346, 350-453, 454-563, and 569-672; these read LINL…APSF, PAAQ…NPVF, SEST…PPVI, SVNS…HPHF, SKPY…TPVI, and INGT…QESM. Residues 22 to 678 are Extracellular-facing; that stretch reads LINLKYSVEE…QESMGSVNLS (657 aa). Glu-31, Glu-32, Asp-88, and Asp-90 together coordinate Ca(2+). Cys-93 and Cys-99 form a disulfide bridge. Ca(2+) is bound by residues Asp-121, Asn-123, Asp-124, Asn-125, Glu-140, Asp-155, Asp-157, Glu-199, Asp-212, Asp-230, Ser-231, Asn-232, Asp-233, Asn-234, and Glu-249. Asn-261 carries an N-linked (GlcNAc...) asparagine glycan. Asp-264, Asp-266, Asn-270, Asp-305, Glu-307, Asp-338, Asn-340, Asp-341, Asn-342, Glu-360, Asp-375, Asp-377, Asn-381, Asp-412, and Glu-414 together coordinate Ca(2+). A glycan (N-linked (GlcNAc...) asparagine) is linked at Asn-420. Ca(2+) is bound by residues Asp-427, Asp-445, Glu-446, Asn-447, Asp-448, Asn-449, Glu-464, Asp-479, Asp-481, Asn-485, Asn-522, Glu-524, and Asp-537. N-linked (GlcNAc...) asparagine glycosylation is present at Asn-485. The N-linked (GlcNAc...) asparagine glycan is linked to Asn-546. Asp-555, Val-556, Asn-557, Asp-558, and Asn-559 together coordinate Ca(2+). Asn-570 carries an N-linked (GlcNAc...) asparagine glycan. Ca(2+)-binding residues include Asp-594, Asp-596, Asn-600, and Asp-646. The N-linked (GlcNAc...) asparagine glycan is linked to Asn-676. A helical membrane pass occupies residues 679–699; that stretch reads LIFIIALGSIAGILFVTMIFV. The Cytoplasmic portion of the chain corresponds to 700 to 1148; sequence AIKCKRDNKE…GVKRLKDIVL (449 aa). 2 disordered regions span residues 901–921 and 1100–1148; these read GNSLKDSGHEESDQTDSEHDV and NVNN…DIVL. Basic and acidic residues-rich tracts occupy residues 906 to 921, 1109 to 1123, and 1130 to 1148; these read DSGHEESDQTDSEHDV, SEAEPRGADSEKVMH, and KEGRNKESPGVKRLKDIVL.

As to quaternary structure, homodimer; antiparallel. In terms of tissue distribution, moderately expressed in all regions of the brain examined, with lowest levels found in the cerebellum. Moderate expression is also found in ovary, and low expression in all other tissues tested. Also detected in primary skin fibroblast.

It is found in the cell membrane. In terms of biological role, calcium-dependent cell-adhesion protein. This Homo sapiens (Human) protein is Protocadherin-19 (PCDH19).